Reading from the N-terminus, the 634-residue chain is NRPS-independent siderophore synthetase rfs (634 aa).

In terms of biological role, NRPS-independent siderophore synthetase that catalyzes the rhizoferrin biosynthesis from citrate and diaminobutane via an ATP-dependent condensation of citrate with diaminobutane followed by the addition of a second citrate to the monocitryl-diaminobutane intermediate. Can also use as substrates the citrate and diaminobutane homologs oxaloacetic acid, diaminopropane, diaminobutane, diaminopentane, tricarballylic acid, hydroxylamine and ornithine. Forms only a mono-substituted intermediate with oxaloacetic acid and diaminopentane whereas both mono-citryl intermediates and full rhizoferrin derivatives were detected when diaminopropane, and ornithine were used as substrates. Tricarballylic acid only forms a rhizoferrin derivative, but no mono-substituted intermediate. The protein is NRPS-independent siderophore synthetase rfs of Rhizopus delemar (strain RA 99-880 / ATCC MYA-4621 / FGSC 9543 / NRRL 43880) (Mucormycosis agent).